Consider the following 261-residue polypeptide: Imidazole glycerol phosphate synthase subunit HisF (261 aa).

Residues D11 and D130 contribute to the active site.

Belongs to the HisA/HisF family. Heterodimer of HisH and HisF.

It localises to the cytoplasm. The catalysed reaction is 5-[(5-phospho-1-deoxy-D-ribulos-1-ylimino)methylamino]-1-(5-phospho-beta-D-ribosyl)imidazole-4-carboxamide + L-glutamine = D-erythro-1-(imidazol-4-yl)glycerol 3-phosphate + 5-amino-1-(5-phospho-beta-D-ribosyl)imidazole-4-carboxamide + L-glutamate + H(+). The protein operates within amino-acid biosynthesis; L-histidine biosynthesis; L-histidine from 5-phospho-alpha-D-ribose 1-diphosphate: step 5/9. Its function is as follows. IGPS catalyzes the conversion of PRFAR and glutamine to IGP, AICAR and glutamate. The HisF subunit catalyzes the cyclization activity that produces IGP and AICAR from PRFAR using the ammonia provided by the HisH subunit. This chain is Imidazole glycerol phosphate synthase subunit HisF, found in Jannaschia sp. (strain CCS1).